We begin with the raw amino-acid sequence, 537 residues long: 2-succinyl-5-enolpyruvyl-6-hydroxy-3-cyclohexene-1-carboxylate synthase (537 aa).

It belongs to the TPP enzyme family. MenD subfamily. In terms of assembly, homodimer. Requires Mg(2+) as cofactor. The cofactor is Mn(2+). Thiamine diphosphate is required as a cofactor.

It catalyses the reaction isochorismate + 2-oxoglutarate + H(+) = 5-enolpyruvoyl-6-hydroxy-2-succinyl-cyclohex-3-ene-1-carboxylate + CO2. It functions in the pathway quinol/quinone metabolism; 1,4-dihydroxy-2-naphthoate biosynthesis; 1,4-dihydroxy-2-naphthoate from chorismate: step 2/7. Its pathway is quinol/quinone metabolism; menaquinone biosynthesis. Functionally, catalyzes the thiamine diphosphate-dependent decarboxylation of 2-oxoglutarate and the subsequent addition of the resulting succinic semialdehyde-thiamine pyrophosphate anion to isochorismate to yield 2-succinyl-5-enolpyruvyl-6-hydroxy-3-cyclohexene-1-carboxylate (SEPHCHC). The chain is 2-succinyl-5-enolpyruvyl-6-hydroxy-3-cyclohexene-1-carboxylate synthase from Dechloromonas aromatica (strain RCB).